Reading from the N-terminus, the 203-residue chain is Small ribosomal subunit protein uS7 (203 aa).

Residues 1–22 (MSESEAPEPDQPAGAEEATGAK) form a disordered region.

It belongs to the universal ribosomal protein uS7 family. Part of the 30S ribosomal subunit.

One of the primary rRNA binding proteins, it binds directly to 16S rRNA where it nucleates assembly of the head domain of the 30S subunit. Is located at the subunit interface close to the decoding center. The sequence is that of Small ribosomal subunit protein uS7 from Halococcus morrhuae (Micrococcus morrhuae).